A 303-amino-acid chain; its full sequence is Methionyl-tRNA formyltransferase (303 aa).

109-112 is a (6S)-5,6,7,8-tetrahydrofolate binding site; sequence SLLP.

The protein belongs to the Fmt family.

It catalyses the reaction L-methionyl-tRNA(fMet) + (6R)-10-formyltetrahydrofolate = N-formyl-L-methionyl-tRNA(fMet) + (6S)-5,6,7,8-tetrahydrofolate + H(+). In terms of biological role, attaches a formyl group to the free amino group of methionyl-tRNA(fMet). The formyl group appears to play a dual role in the initiator identity of N-formylmethionyl-tRNA by promoting its recognition by IF2 and preventing the misappropriation of this tRNA by the elongation apparatus. The polypeptide is Methionyl-tRNA formyltransferase (Helicobacter pylori (strain ATCC 700392 / 26695) (Campylobacter pylori)).